A 568-amino-acid chain; its full sequence is Natural resistance-associated macrophage protein 2 (568 aa).

Positions 1 to 40 (MVLGPEQKMSDDSVSGDHGESASLGNINPAYSNPSLSQSP) are disordered. Over 1–69 (MVLGPEQKMS…EEYSCFSFRK (69 aa)) the chain is Cytoplasmic. Positions 8–20 (KMSDDSVSGDHGE) are enriched in basic and acidic residues. The span at 23-40 (SLGNINPAYSNPSLSQSP) shows a compositional bias: polar residues. Residues 70 to 90 (LWAFTGPGFLMSIAYLDPGNI) form a helical membrane-spanning segment. Over 91 to 96 (ESDLQS) the chain is Extracellular. The chain crosses the membrane as a helical span at residues 97–117 (GAVAGFKLLWILLLATLVGLL). The Cytoplasmic portion of the chain corresponds to 118 to 154 (LQRLAARLGVVTGLHLAEVCHRQYPKVPRVILWLMVE). Residues 155-175 (LAIIGSDMQEVIGSAIAINLL) traverse the membrane as a helical segment. Topologically, residues 176 to 179 (SVGR) are extracellular. A helical membrane pass occupies residues 180-200 (IPLWGGVLITIADTFVFLFLD). At 201–208 (KYGLRKLE) the chain is on the cytoplasmic side. A helical transmembrane segment spans residues 209–229 (AFFGFLITIMALTFGYEYVTV). The Extracellular portion of the chain corresponds to 230 to 255 (KPSQSQVLKGMFVPSCSGCRTPQIEQ). A helical membrane pass occupies residues 256-276 (AVGIVGAVIMPHNMYLHSALV). At 277 to 301 (KSRQVNRNNKQEVREANKYFFIESC) the chain is on the cytoplasmic side. A helical membrane pass occupies residues 302 to 322 (IALFVSFIINVFVVSVFAEAF). Over 323-360 (FGKTNEQVVEVCTNTSSPHAGLFPKDNSTLAVDIYKGG) the chain is Extracellular. 2 N-linked (GlcNAc...) asparagine glycosylation sites follow: Asn-336 and Asn-349. The helical transmembrane segment at 361–381 (VVLGCYFGPAALYIWAVGILA) threads the bilayer. Over 382-408 (AGQSSTMTGTYSGQFVMEGFLNLKWSR) the chain is Cytoplasmic. A helical transmembrane segment spans residues 409 to 429 (FARVVLTRSIAIIPTLLVAVF). The Extracellular segment spans residues 430 to 440 (QDVEHLTGMND). The chain crosses the membrane as a helical span at residues 441–461 (FLNVLQSLQLPFALIPILTFT). Topologically, residues 462-482 (SLRPVMSDFANGLGWRIAGGI) are cytoplasmic. Residues 483–503 (LVLIICSINMYFVVVYVRDLG) form a helical membrane-spanning segment. At 504 to 506 (HVA) the chain is on the extracellular side. A helical membrane pass occupies residues 507–527 (LYVVAAVVSVAYLGFVFYLGW). The Cytoplasmic segment spans residues 528–568 (QCLIALGMSFLDCGHTCHLGLTAQPELYLLNTMDADSLVSR). Residues 555-559 (YLLNT) form a required for early endosome targeting region. Ser-564 and Ser-567 each carry phosphoserine.

This sequence belongs to the NRAMP family. As to quaternary structure, forms a complex with NDFIP1 and NEDD4L, in cortical neurons, in response to iron and cobalt exposure; this interaction leads to SLC11A2 ubiquitination by NEDD4L and proteasome-dependent degradation. Interacts with NDFIP1, NDFIP2 and WWP2; this interaction leads to SLC11A2 ubiquitination by WWP2 and subsequent proteasome-dependent degradation. Interacts with COX2 and TOM6 at the outer mitochondrion membrane. Interacts with ARRDC1; this interaction regulates the incorporation of SLC11A2 into extracellular vesicles through an ubiquitination-dependent mechanism. Interacts with ARRDC4; controls the incorporation of SLC11A2 into extracellular vesicles through an ubiquitination-dependent mechanism. In terms of processing, ubiquitinated by WWP2. N-glycosylated. In terms of tissue distribution, ubiquitously expressed. Expressed in erythroid progenitors.

It is found in the early endosome membrane. The protein resides in the apical cell membrane. The protein localises to the late endosome membrane. Its subcellular location is the lysosome membrane. It localises to the cell membrane. It is found in the extracellular vesicle membrane. The protein resides in the mitochondrion outer membrane. The protein localises to the golgi apparatus. Its subcellular location is the trans-Golgi network membrane. It localises to the recycling endosome membrane. It catalyses the reaction Fe(2+)(in) + H(+)(in) = Fe(2+)(out) + H(+)(out). The catalysed reaction is Co(2+)(out) + H(+)(out) = Co(2+)(in) + H(+)(in). It carries out the reaction Cd(2+)(out) + H(+)(out) = Cd(2+)(in) + H(+)(in). The enzyme catalyses Mn(2+)(in) + H(+)(in) = Mn(2+)(out) + H(+)(out). It catalyses the reaction Zn(2+)(out) + H(+)(out) = Zn(2+)(in) + H(+)(in). The catalysed reaction is Ni(2+)(out) + H(+)(out) = Ni(2+)(in) + H(+)(in). It carries out the reaction H(+)(in) = H(+)(out). The enzyme catalyses Fe(2+)(in) = Fe(2+)(out). Its function is as follows. Proton-coupled metal ion symporter operating with a proton to metal ion stoichiometry of 1:1. Selectively transports various divalent metal cations, in decreasing affinity: Cd(2+) &gt; Fe(2+) &gt; Co(2+), Mn(2+) &gt;&gt; Zn(2+), Ni(2+), VO(2+). Essential for maintenance of iron homeostasis by modulating intestinal absorption of dietary Fe(2+) and TF-associated endosomal Fe(2+) transport in erythroid precursors and other cells. Enables Fe(2+) and Mn(2+) ion entry into mitochondria, and is thus expected to promote mitochondrial heme synthesis, iron-sulfur cluster biogenesis and antioxidant defense. Can mediate uncoupled fluxes of either protons or metal ions. This chain is Natural resistance-associated macrophage protein 2 (SLC11A2), found in Homo sapiens (Human).